The primary structure comprises 454 residues: uncharacterized protein (454 aa).

The tract at residues 1–25 is disordered; it reads MHGPTSKAISRNVRSVKRPRRAPRP. Basic residues predominate over residues 14-23; it reads RSVKRPRRAP.

The protein localises to the cytoplasm. It is found in the nucleus. This is an uncharacterized protein from Saccharomyces cerevisiae (strain ATCC 204508 / S288c) (Baker's yeast).